Reading from the N-terminus, the 166-residue chain is Biotin carboxyl carrier protein of acetyl-CoA carboxylase (166 aa).

A compositionally biased stretch (polar residues) spans 61 to 70 (STASEASSPA). The interval 61-82 (STASEASSPASVKDVPVEEQPQ) is disordered. Residues 90–166 (GDIVESPLVG…EFGQGLVRIK (77 aa)) enclose the Biotinyl-binding domain. The residue at position 132 (Lys132) is an N6-biotinyllysine.

Homodimer.

It participates in lipid metabolism; fatty acid biosynthesis. Functionally, this protein is a component of the acetyl coenzyme A carboxylase complex; first, biotin carboxylase catalyzes the carboxylation of the carrier protein and then the transcarboxylase transfers the carboxyl group to form malonyl-CoA. The protein is Biotin carboxyl carrier protein of acetyl-CoA carboxylase of Streptococcus pyogenes serotype M6 (strain ATCC BAA-946 / MGAS10394).